Reading from the N-terminus, the 612-residue chain is UvrABC system protein C (612 aa).

One can recognise a GIY-YIG domain in the interval 18 to 96 (TRPGVYRMMD…IKTLKPPYNI (79 aa)). The 36-residue stretch at 208–243 (PEIINETIQQMEVASAQLDFERAAVLRDQVDYLRRV) folds into the UVR domain.

It belongs to the UvrC family. As to quaternary structure, interacts with UvrB in an incision complex.

The protein localises to the cytoplasm. The UvrABC repair system catalyzes the recognition and processing of DNA lesions. UvrC both incises the 5' and 3' sides of the lesion. The N-terminal half is responsible for the 3' incision and the C-terminal half is responsible for the 5' incision. This Hahella chejuensis (strain KCTC 2396) protein is UvrABC system protein C.